Reading from the N-terminus, the 113-residue chain is Integration host factor subunit alpha (113 aa).

The interval 88–113 (ALNGGVSDETEGADDDDDDEEGEGDE) is disordered. Residues 95 to 113 (DETEGADDDDDDEEGEGDE) are compositionally biased toward acidic residues.

This sequence belongs to the bacterial histone-like protein family. Heterodimer of an alpha and a beta chain.

Functionally, this protein is one of the two subunits of integration host factor, a specific DNA-binding protein that functions in genetic recombination as well as in transcriptional and translational control. The protein is Integration host factor subunit alpha of Anaeromyxobacter dehalogenans (strain 2CP-C).